Reading from the N-terminus, the 184-residue chain is Protein GrpE (184 aa).

Residues Met-1–Asp-26 are disordered.

The protein belongs to the GrpE family. As to quaternary structure, homodimer.

Its subcellular location is the cytoplasm. Its function is as follows. Participates actively in the response to hyperosmotic and heat shock by preventing the aggregation of stress-denatured proteins, in association with DnaK and GrpE. It is the nucleotide exchange factor for DnaK and may function as a thermosensor. Unfolded proteins bind initially to DnaJ; upon interaction with the DnaJ-bound protein, DnaK hydrolyzes its bound ATP, resulting in the formation of a stable complex. GrpE releases ADP from DnaK; ATP binding to DnaK triggers the release of the substrate protein, thus completing the reaction cycle. Several rounds of ATP-dependent interactions between DnaJ, DnaK and GrpE are required for fully efficient folding. The polypeptide is Protein GrpE (Bordetella bronchiseptica (strain ATCC BAA-588 / NCTC 13252 / RB50) (Alcaligenes bronchisepticus)).